The sequence spans 339 residues: Heat-inducible transcription repressor HrcA (339 aa).

Belongs to the HrcA family.

Its function is as follows. Negative regulator of class I heat shock genes (grpE-dnaK-dnaJ and groELS operons). Prevents heat-shock induction of these operons. In Clostridioides difficile (strain 630) (Peptoclostridium difficile), this protein is Heat-inducible transcription repressor HrcA.